Here is a 756-residue protein sequence, read N- to C-terminus: Inactive carboxypeptidase-like protein X2 (756 aa).

Residues 1–25 (MSRPGTATPALALVLLAVTLAGVGA) form the signal peptide. The disordered stretch occupies residues 51–131 (EPELETFSPP…DHSVRVARED (81 aa)). The segment covering 68-78 (EWERRPQEPRP) has biased composition (basic and acidic residues). Over residues 79–90 (PKRATKPKKAPK) the composition is skewed to basic residues. Residues 113-131 (KSSEKAANDDHSVRVARED) are compositionally biased toward basic and acidic residues. The region spanning 134-293 (ESCPPLGLET…ICMRMEILGC (160 aa)) is the F5/8 type C domain. An intrachain disulfide couples Cys-136 to Cys-293. N-linked (GlcNAc...) asparagine glycans are attached at residues Asn-231, Asn-241, Asn-281, Asn-337, and Asn-491. One can recognise a Peptidase M14 domain in the interval 317 to 640 (KHHNYKEMRQ…ESLIVFMEQV (324 aa)).

It belongs to the peptidase M14 family.

The protein localises to the secreted. In terms of biological role, may be involved in cell-cell interactions. The protein is Inactive carboxypeptidase-like protein X2 (CPXM2) of Homo sapiens (Human).